Here is a 306-residue protein sequence, read N- to C-terminus: Aspartate carbamoyltransferase catalytic subunit (306 aa).

Carbamoyl phosphate-binding residues include Arg-55 and Thr-56. Position 84 (Lys-84) interacts with L-aspartate. Carbamoyl phosphate contacts are provided by Arg-105, His-133, and Gln-136. L-aspartate-binding residues include Arg-166 and Arg-227. Positions 265 and 266 each coordinate carbamoyl phosphate.

This sequence belongs to the aspartate/ornithine carbamoyltransferase superfamily. ATCase family. In terms of assembly, heterododecamer (2C3:3R2) of six catalytic PyrB chains organized as two trimers (C3), and six regulatory PyrI chains organized as three dimers (R2).

The enzyme catalyses carbamoyl phosphate + L-aspartate = N-carbamoyl-L-aspartate + phosphate + H(+). It participates in pyrimidine metabolism; UMP biosynthesis via de novo pathway; (S)-dihydroorotate from bicarbonate: step 2/3. In terms of biological role, catalyzes the condensation of carbamoyl phosphate and aspartate to form carbamoyl aspartate and inorganic phosphate, the committed step in the de novo pyrimidine nucleotide biosynthesis pathway. This chain is Aspartate carbamoyltransferase catalytic subunit, found in Aeromonas hydrophila subsp. hydrophila (strain ATCC 7966 / DSM 30187 / BCRC 13018 / CCUG 14551 / JCM 1027 / KCTC 2358 / NCIMB 9240 / NCTC 8049).